The primary structure comprises 320 residues: Zinc finger Ran-binding domain-containing protein 2 (320 aa).

Serine 9 is subject to Phosphoserine. The RanBP2-type 1 zinc-finger motif lies at 9 to 40; the sequence is SDGDWICPDKKCGNVNFARRTSCNRCGREKTT. Lysine 18, lysine 54, and lysine 92 each carry N6-acetyllysine. Residues 65 to 94 form a RanBP2-type 2 zinc finger; it reads SANDWQCKTCSNVNWARRSECNMCNTPKYA. The tract at residues 117–320 is disordered; sequence REESDGEYDE…QVIGENTKQP (204 aa). 5 positions are modified to phosphoserine: serine 120, serine 153, serine 181, serine 188, and serine 193. The span at 150–163 shows a compositional bias: acidic residues; that stretch reads DKESEGEEEDEDED. The interval 151 to 320 is required for nuclear targeting; that stretch reads KESEGEEEDE…QVIGENTKQP (170 aa). Residues 196–210 are compositionally biased toward basic residues; that stretch reads KKSNRRSRSKSRSSH. Low complexity-rich tracts occupy residues 211–224 and 232–242; these read SRSS…SSSR and RSSSSSQSRSR. Over residues 251–273 the composition is skewed to basic residues; it reads SRGSKSRSSSRSHRGSSSPRKRS.

This sequence belongs to the ZRANB2 family. As to quaternary structure, interacts with the C-terminal half of SNRP70/U1-70K, the Arg/Ser-rich domain of AKAP17A as well as with U2AF1 and CLK1. Phosphorylated on Ser-310 upon DNA damage, probably by ATM or ATR.

The protein resides in the nucleus. Splice factor required for alternative splicing of TRA2B/SFRS10 transcripts. Binds to ssRNA containing the consensus sequence 5'-AGGUAA-3'. May interfere with constitutive 5'-splice site selection. The polypeptide is Zinc finger Ran-binding domain-containing protein 2 (Pongo abelii (Sumatran orangutan)).